The following is a 649-amino-acid chain: ATP-dependent zinc metalloprotease FtsH (649 aa).

Over 1-18 (MQCSYPLARQLERSSALN) the chain is Cytoplasmic. A helical transmembrane segment spans residues 19–39 (NNLFQKAAIWLVIALVLFTVF). Residues 40-115 (KQFDKPRAQD…VTGKADDEPN (76 aa)) lie on the Periplasmic side of the membrane. A helical transmembrane segment spans residues 116 to 136 (VLVQALYYLGPTLLIIVFWFY). At 137-649 (MMRQMQGGGK…PATARADETV (513 aa)) the chain is on the cytoplasmic side. 210–217 (GPPGTGKT) contributes to the ATP binding site. His432 is a binding site for Zn(2+). Glu433 is an active-site residue. Residues His436 and Asp508 each coordinate Zn(2+). The disordered stretch occupies residues 606 to 649 (IMAGRPPRPPRGAQGPNSGGNTPPGGSPVAPTNAPATARADETV). Low complexity predominate over residues 616 to 626 (RGAQGPNSGGN).

This sequence in the central section; belongs to the AAA ATPase family. The protein in the C-terminal section; belongs to the peptidase M41 family. As to quaternary structure, homohexamer. Requires Zn(2+) as cofactor.

Its subcellular location is the cell inner membrane. In terms of biological role, acts as a processive, ATP-dependent zinc metallopeptidase for both cytoplasmic and membrane proteins. Plays a role in the quality control of integral membrane proteins. This is ATP-dependent zinc metalloprotease FtsH from Cupriavidus metallidurans (strain ATCC 43123 / DSM 2839 / NBRC 102507 / CH34) (Ralstonia metallidurans).